A 161-amino-acid polypeptide reads, in one-letter code: Nucleotide-binding protein Pput_4372 (161 aa).

It belongs to the YajQ family.

Functionally, nucleotide-binding protein. This chain is Nucleotide-binding protein Pput_4372, found in Pseudomonas putida (strain ATCC 700007 / DSM 6899 / JCM 31910 / BCRC 17059 / LMG 24140 / F1).